We begin with the raw amino-acid sequence, 261 residues long: Bidirectional sugar transporter SWEET1b (261 aa).

Over 1-6 the chain is Extracellular; sequence MEDLAK. Residues 7–27 form a helical membrane-spanning segment; that stretch reads FLFGVSGNVIALFLFLSPVPT. Residues 7–95 enclose the MtN3/slv 1 domain; sequence FLFGVSGNVI…VVFLVFASTH (89 aa). Residues 28–42 are Cytoplasmic-facing; it reads FWRIIRRKSTEDFSG. Residues 43–63 traverse the membrane as a helical segment; that stretch reads VPYNMTLINCLLSAWYGLPFV. Topologically, residues 64–71 are extracellular; the sequence is SPNNILVS. Residues 72–92 form a helical membrane-spanning segment; that stretch reads TINGAGAVIETAYVVVFLVFA. Topologically, residues 93 to 101 are cytoplasmic; sequence STHKTRLRT. Residues 102–122 traverse the membrane as a helical segment; that stretch reads LGLAAAVASVFAAVALVSLLA. Topologically, residues 123-129 are extracellular; sequence LHGQHRK. A helical membrane pass occupies residues 130–150; sequence LLCGVAATVCSICMYASPLSI. The MtN3/slv 2 domain occupies 133 to 215; the sequence is GVAATVCSIC…VLYAIYRNNK (83 aa). The Cytoplasmic portion of the chain corresponds to 151-164; the sequence is MRLVIKTKSVEYMP. A helical membrane pass occupies residues 165–185; sequence FLLSLAVFLCGTSWFIYGLLG. Topologically, residues 186–189 are extracellular; sequence RDPF. A helical transmembrane segment spans residues 190–210; the sequence is VTIPNGCGSFLGAVQLVLYAI. Residues 211–261 lie on the Cytoplasmic side of the membrane; the sequence is YRNNKGAGGGSGGKQAGDDDVEMAEGRNNKVADGGAAEDDSTAGGKAGTEV. A disordered region spans residues 218–261; that stretch reads GGGSGGKQAGDDDVEMAEGRNNKVADGGAAEDDSTAGGKAGTEV.

It belongs to the SWEET sugar transporter family. In terms of assembly, forms homodimers.

The protein localises to the cell membrane. The catalysed reaction is D-glucose(out) = D-glucose(in). It carries out the reaction D-galactose(in) = D-galactose(out). Functionally, mediates transport of sugars across the plasma membrane. Can transport glucose and galactose, but not fructose, mannose and sucrose. This Oryza sativa subsp. indica (Rice) protein is Bidirectional sugar transporter SWEET1b (SWEET1B).